The primary structure comprises 398 residues: Dual-specificity RNA methyltransferase RlmN (398 aa).

The active-site Proton acceptor is Glu-119. The region spanning 125 to 364 is the Radical SAM core domain; the sequence is DGDRATLCVS…TIVRKTRGDD (240 aa). Residues Cys-132 and Cys-369 are joined by a disulfide bond. Residues Cys-139, Cys-143, and Cys-146 each coordinate [4Fe-4S] cluster. Residues 193 to 194, Ser-225, 247 to 249, and Asn-326 each bind S-adenosyl-L-methionine; these read GE and SLH. The S-methylcysteine intermediate role is filled by Cys-369.

Belongs to the radical SAM superfamily. RlmN family. [4Fe-4S] cluster is required as a cofactor.

It is found in the cytoplasm. The catalysed reaction is adenosine(2503) in 23S rRNA + 2 reduced [2Fe-2S]-[ferredoxin] + 2 S-adenosyl-L-methionine = 2-methyladenosine(2503) in 23S rRNA + 5'-deoxyadenosine + L-methionine + 2 oxidized [2Fe-2S]-[ferredoxin] + S-adenosyl-L-homocysteine. It carries out the reaction adenosine(37) in tRNA + 2 reduced [2Fe-2S]-[ferredoxin] + 2 S-adenosyl-L-methionine = 2-methyladenosine(37) in tRNA + 5'-deoxyadenosine + L-methionine + 2 oxidized [2Fe-2S]-[ferredoxin] + S-adenosyl-L-homocysteine. In terms of biological role, specifically methylates position 2 of adenine 2503 in 23S rRNA and position 2 of adenine 37 in tRNAs. m2A2503 modification seems to play a crucial role in the proofreading step occurring at the peptidyl transferase center and thus would serve to optimize ribosomal fidelity. The polypeptide is Dual-specificity RNA methyltransferase RlmN (Serratia proteamaculans (strain 568)).